Reading from the N-terminus, the 308-residue chain is Homeobox protein HMX3 (308 aa).

Disordered regions lie at residues methionine 1–leucine 57 and alanine 107–threonine 184. Residues proline 9 to lysine 19 show a composition bias toward pro residues. 2 stretches are compositionally biased toward basic and acidic residues: residues alanine 135–serine 144 and glutamate 156–lysine 177. A DNA-binding region (homeobox) is located at residues lysine 181–leucine 240.

The protein belongs to the HMX homeobox family.

It is found in the nucleus. Functionally, transcription factor involved in specification of neuronal cell types and which is required for inner ear and hypothalamus development. Binds to the 5'-CAAGTG-3' core sequence. This chain is Homeobox protein HMX3 (HMX3), found in Gallus gallus (Chicken).